The chain runs to 296 residues: Formamidopyrimidine-DNA glycosylase (296 aa).

The active-site Schiff-base intermediate with DNA is the Pro-2. Residue Glu-3 is the Proton donor of the active site. Lys-61 acts as the Proton donor; for beta-elimination activity in catalysis. Residues His-104, Arg-123, and Lys-169 each coordinate DNA. The FPG-type zinc-finger motif lies at 255-289 (DAYGREGEPCRRCGAIMRRDKFMNRSSFYCPRCQP). Catalysis depends on Arg-279, which acts as the Proton donor; for delta-elimination activity.

This sequence belongs to the FPG family. As to quaternary structure, monomer. The cofactor is Zn(2+).

It catalyses the reaction Hydrolysis of DNA containing ring-opened 7-methylguanine residues, releasing 2,6-diamino-4-hydroxy-5-(N-methyl)formamidopyrimidine.. It carries out the reaction 2'-deoxyribonucleotide-(2'-deoxyribose 5'-phosphate)-2'-deoxyribonucleotide-DNA = a 3'-end 2'-deoxyribonucleotide-(2,3-dehydro-2,3-deoxyribose 5'-phosphate)-DNA + a 5'-end 5'-phospho-2'-deoxyribonucleoside-DNA + H(+). Functionally, involved in base excision repair of DNA damaged by oxidation or by mutagenic agents. Acts as a DNA glycosylase that recognizes and removes damaged bases. Has a preference for oxidized purines, such as 7,8-dihydro-8-oxoguanine (8-oxoG). Has AP (apurinic/apyrimidinic) lyase activity and introduces nicks in the DNA strand. Cleaves the DNA backbone by beta-delta elimination to generate a single-strand break at the site of the removed base with both 3'- and 5'-phosphates. The protein is Formamidopyrimidine-DNA glycosylase of Mycobacterium sp. (strain KMS).